Reading from the N-terminus, the 189-residue chain is Capsid protein (189 aa).

N-acetylmethionine; by host is present on methionine 1.

This sequence belongs to the tymoviruses capsid protein family.

It localises to the virion. Functionally, self-assembles to form a T=3 icosahedral capsid composed of 180 copies of the capsid protein. The capsid encapsulates the single-stranded RNA genome. A pentameric unit may be lost during decapsidation. This chain is Capsid protein, found in Brassica (Chinese cabbage).